The chain runs to 100 residues: Urease subunit gamma (100 aa).

This sequence belongs to the urease gamma subunit family. Heterotrimer of UreA (gamma), UreB (beta) and UreC (alpha) subunits. Three heterotrimers associate to form the active enzyme.

It localises to the cytoplasm. The catalysed reaction is urea + 2 H2O + H(+) = hydrogencarbonate + 2 NH4(+). Its pathway is nitrogen metabolism; urea degradation; CO(2) and NH(3) from urea (urease route): step 1/1. The chain is Urease subunit gamma from Opitutus terrae (strain DSM 11246 / JCM 15787 / PB90-1).